A 367-amino-acid chain; its full sequence is Innexin inx4 (367 aa).

Topologically, residues 1–21 are cytoplasmic; it reads MYAAVKPLSKYLQFKSVHIYD. Residues 22–42 form a helical membrane-spanning segment; that stretch reads AIFTLHSKVTVALLLACTFLL. The Extracellular portion of the chain corresponds to 43-110; that stretch reads SSKQYFGDPI…PENRNYITYY (68 aa). The helical transmembrane segment at 111-131 threads the bilayer; that stretch reads QWVVLVLLLESFVFYMPAFLW. At 132–186 the chain is on the cytoplasmic side; sequence KIWEGGRLKHLCDDFHKMAVCKDKSRTHLRVLVNYFSSDYKETHFRYFVSYVFCE. The helical transmembrane segment at 187–207 threads the bilayer; it reads ILNLSISILNFLLLDVFFGGF. Topologically, residues 208-268 are extracellular; that stretch reads WGRYRNALLS…LLPLNILNEK (61 aa). A helical transmembrane segment spans residues 269-289; sequence IFAFLWIWFILVAMLISLKFL. Over 290–367 the chain is Cytoplasmic; that stretch reads YRLATVLYPG…IKIPPGADKI (78 aa).

Belongs to the pannexin family. As to expression, expressed in nurse cells and oocyte during oogenesis. Uniform expression in imaginal wing disk and low expression in developing imaginal CNS. Expressed in embryonic pole cells and primordial germ cells.

It localises to the cell membrane. The protein localises to the cell junction. Its subcellular location is the gap junction. Its function is as follows. Structural component of the gap junctions in germline cells. Required for differentiation and survival of germline cysts in females and of spermatogonia in males; gap junctional communication between spermatogonia and somatic cyst cells may be required for normal differentiation and survival of spermatogonia. This is Innexin inx4 (zpg) from Drosophila melanogaster (Fruit fly).